A 443-amino-acid polypeptide reads, in one-letter code: Xaa-Pro dipeptidase (443 aa).

Positions 244, 255, 339, 384, and 423 each coordinate Mn(2+).

It belongs to the peptidase M24B family. Bacterial-type prolidase subfamily. It depends on Mn(2+) as a cofactor.

The enzyme catalyses Xaa-L-Pro dipeptide + H2O = an L-alpha-amino acid + L-proline. Its function is as follows. Splits dipeptides with a prolyl residue in the C-terminal position. This chain is Xaa-Pro dipeptidase, found in Pseudoalteromonas atlantica (strain T6c / ATCC BAA-1087).